Here is a 348-residue protein sequence, read N- to C-terminus: Nicotinate-nucleotide--dimethylbenzimidazole phosphoribosyltransferase (348 aa).

Residue E316 is the Proton acceptor of the active site.

Belongs to the CobT family.

It carries out the reaction 5,6-dimethylbenzimidazole + nicotinate beta-D-ribonucleotide = alpha-ribazole 5'-phosphate + nicotinate + H(+). The protein operates within nucleoside biosynthesis; alpha-ribazole biosynthesis; alpha-ribazole from 5,6-dimethylbenzimidazole: step 1/2. Functionally, catalyzes the synthesis of alpha-ribazole-5'-phosphate from nicotinate mononucleotide (NAMN) and 5,6-dimethylbenzimidazole (DMB). The chain is Nicotinate-nucleotide--dimethylbenzimidazole phosphoribosyltransferase from Xanthomonas campestris pv. campestris (strain B100).